The primary structure comprises 205 residues: Methyltransferase-like 26 B (205 aa).

This sequence belongs to the UPF0585 family.

This is Methyltransferase-like 26 B from Danio rerio (Zebrafish).